Consider the following 1002-residue polypeptide: Transposase for transposon gamma-delta (1002 aa).

It belongs to the transposase 7 family.

Required for transposition of transposon Tn1000. This chain is Transposase for transposon gamma-delta (tnpA), found in Escherichia coli (strain K12).